Reading from the N-terminus, the 1366-residue chain is Serine/threonine-protein kinase RUNKEL (1366 aa).

ATP contacts are provided by residues 10-18 and lysine 33; that span reads IGHGKCSTV. The active-site Proton acceptor is the aspartate 121. Disordered stretches follow at residues 276-356, 367-386, 398-502, and 524-549; these read TKPC…VNIL, QKEN…NENC, LDFD…DSSK, and PSRK…FSKK. Residues 283 to 302 show a composition bias toward basic and acidic residues; that stretch reads RNGDRPNKTPPKYREKDRKG. A compositionally biased stretch (polar residues) spans 304–313; it reads SKQNENSIQG. The span at 367–376 shows a compositional bias: basic and acidic residues; that stretch reads QKENEKENYR. Over residues 398–414 the composition is skewed to acidic residues; the sequence is LDFDENNDDEGPDESEG. Residues 422-433 show a composition bias toward basic and acidic residues; the sequence is QEERVMSHNENH. The segment covering 438-454 has biased composition (polar residues); the sequence is VVSSNVPDENSSANETP. HEAT repeat units lie at residues 595–633, 638–675, 699–737, 835–872, 878–907, 908–945, 946–986, 992–1018, 1019–1057, 1072–1111, 1279–1316, and 1329–1366; these read LTNG…HSTS, LANS…YIST, QVSN…QGAY, TEEK…NSRR, FCNA…AFVN, VIAS…RAPV, KTNA…LVEA, DDFR…NGEI, IIRE…LLTE, ISNS…IKIS, TNLP…YACK, and GHDV…RLPR.

Belongs to the protein kinase superfamily. Ser/Thr protein kinase family. In terms of assembly, binds to microtubules (MT). In terms of tissue distribution, expressed in proliferating tissues of seedlings, lateral roots, young rosette leaves, siliques, flowers, embryos and stems (including apical meristem).

Its subcellular location is the cytoplasm. The protein localises to the cytoskeleton. It is found in the phragmoplast. It localises to the spindle. The enzyme catalyses L-seryl-[protein] + ATP = O-phospho-L-seryl-[protein] + ADP + H(+). It catalyses the reaction L-threonyl-[protein] + ATP = O-phospho-L-threonyl-[protein] + ADP + H(+). Its function is as follows. Essential protein that regulates phragmoplast microtubule organization during cell plate expansion in cytokinesis during cell division, both somatic and syncytial. Required for endosperm cellularisation. In pollen development, involved in cellularisation during microsporogenesis by regulating radial microtubules (MT) organization in microspore mother cells. Seems to not have kinase activity. In Arabidopsis thaliana (Mouse-ear cress), this protein is Serine/threonine-protein kinase RUNKEL.